The primary structure comprises 743 residues: MSSDSRPPQPDTSTQSNSESESPAISSPTPQDHAPMTNRDWWPNQIDVSMLHPHPSQASPLGADFDYPKEFAKLDVDALKADVMSVMTTSQDWWPADYGHYGGLFIRMSWHAAGTYRIQDGRGGGGQGMQRFAPLNSWPDNVSLDKARRLLWPVKQKYGSKISWADLIIFAGNCALDSMGFKTFGFGFGREDVWQPEEVMWGEEDVWLGTDKRYSGKRDLAQPYGATTMGLIYVNPEGPEGKPDPVAAAHDIRETFARMAMNDEETAALIVGGHSFGKTHGAGDADLVGPEPEAAPIEQQGFGWKSSFGSGKGKDAITSGLEVVWTPTPTQWGNGFLELLYGYEWELTKSPAGAWQFTAKDGAGAGTIPDPFGGPGRAPTMLVTDISMREDPIYRRITQRWLEHPEELTEAFAKAWYKLLHRDMGPVSRYLGPWVAEPQLWQDPVPDVDHELVDAKDVAALKSKVLASGLTVAQLVKTAWSAASSFRRTDKRGGANGGRLRLEPQKSWESNEPADLDQVLSVLEGIQQDFNSSAAGGKKISLADLIVLAGSAAVEKAAKDGGHEVSVPFAPGRTDASQENTDVESFAVLEPRADGFRNYVRVGEKAPLEHLLIERAYRLGVTAPEMTVLVGGLRALGANHGGSKHGVFTDNPGVLSNDFFVNLLDMGTEWKASEAAENVYEGCDRSSGQLKWTATANDLVFGSNSVLRALAEVYAQSDAKQKFAEDFAAAWAKVMNNDRFDLE.

Polar residues predominate over residues 1 to 15 (MSSDSRPPQPDTSTQ). The disordered stretch occupies residues 1 to 40 (MSSDSRPPQPDTSTQSNSESESPAISSPTPQDHAPMTNRD). Residues 16–28 (SNSESESPAISSP) show a composition bias toward low complexity. A cross-link (tryptophyl-tyrosyl-methioninium (Trp-Tyr) (with M-259)) is located at residues 110–233 (WHAAGTYRIQ…YGATTMGLIY (124 aa)). His-111 serves as the catalytic Proton acceptor. A cross-link (tryptophyl-tyrosyl-methioninium (Tyr-Met) (with W-110)) is located at residues 233–259 (YVNPEGPEGKPDPVAAAHDIRETFARM). His-274 serves as a coordination point for heme b. The tract at residues 490–511 (DKRGGANGGRLRLEPQKSWESN) is disordered.

Belongs to the peroxidase family. Peroxidase/catalase subfamily. As to quaternary structure, homodimer or homotetramer. It depends on heme b as a cofactor. In terms of processing, formation of the three residue Trp-Tyr-Met cross-link is important for the catalase, but not the peroxidase activity of the enzyme.

The enzyme catalyses H2O2 + AH2 = A + 2 H2O. It catalyses the reaction 2 H2O2 = O2 + 2 H2O. Bifunctional enzyme with both catalase and broad-spectrum peroxidase activity. This chain is Catalase-peroxidase, found in Mycobacterium marinum (strain ATCC BAA-535 / M).